Consider the following 121-residue polypeptide: Large ribosomal subunit protein mL52 (121 aa).

The transit peptide at 1-22 (MAALGTWLSSVRRLHCSVVARA) directs the protein to the mitochondrion. The span at 98-109 (QEERKKEHDLKP) shows a compositional bias: basic and acidic residues. Positions 98–121 (QEERKKEHDLKPKGTLLRSPLPNQ) are disordered.

Belongs to the mitochondrion-specific ribosomal protein mL52 family. Component of the mitochondrial ribosome large subunit (39S) which comprises a 16S rRNA and about 50 distinct proteins.

The protein localises to the mitochondrion. The protein is Large ribosomal subunit protein mL52 (Mrpl52) of Mus musculus (Mouse).